A 259-amino-acid polypeptide reads, in one-letter code: Phosphatidylglycerol--prolipoprotein diacylglyceryl transferase (259 aa).

4 helical membrane-spanning segments follow: residues 16-36, 55-75, 92-112, and 117-137; these read LAISWYSLSYVIGILLGWFYA, FITYAVIGIIVGGRLGFVLLY, EGGMSFHGGALGGIIAAYLFC, and INFLSLTDIIAPVVPIGLFLG. Arg138 contributes to the a 1,2-diacyl-sn-glycero-3-phospho-(1'-sn-glycerol) binding site. Helical transmembrane passes span 172–192, 201–221, and 228–248; these read QLYEAFFEGLVLFSILAYATF, GLNSGIFFTFYGLFRITIEIF, and IGFILDSLTMGQILSVPMLLL.

The protein belongs to the Lgt family.

Its subcellular location is the cell inner membrane. The enzyme catalyses L-cysteinyl-[prolipoprotein] + a 1,2-diacyl-sn-glycero-3-phospho-(1'-sn-glycerol) = an S-1,2-diacyl-sn-glyceryl-L-cysteinyl-[prolipoprotein] + sn-glycerol 1-phosphate + H(+). It participates in protein modification; lipoprotein biosynthesis (diacylglyceryl transfer). Its function is as follows. Catalyzes the transfer of the diacylglyceryl group from phosphatidylglycerol to the sulfhydryl group of the N-terminal cysteine of a prolipoprotein, the first step in the formation of mature lipoproteins. The polypeptide is Phosphatidylglycerol--prolipoprotein diacylglyceryl transferase (Rickettsia rickettsii (strain Iowa)).